A 671-amino-acid polypeptide reads, in one-letter code: DNA ligase (671 aa).

NAD(+) contacts are provided by residues Asp32–Asp36, Ser81–Leu82, and Glu113. The active-site N6-AMP-lysine intermediate is Lys115. 4 residues coordinate NAD(+): Arg136, Glu173, Lys290, and Lys314. The Zn(2+) site is built by Cys408, Cys411, Cys426, and Cys432. In terms of domain architecture, BRCT spans Glu593–Ala671.

The protein belongs to the NAD-dependent DNA ligase family. LigA subfamily. Mg(2+) is required as a cofactor. It depends on Mn(2+) as a cofactor.

It catalyses the reaction NAD(+) + (deoxyribonucleotide)n-3'-hydroxyl + 5'-phospho-(deoxyribonucleotide)m = (deoxyribonucleotide)n+m + AMP + beta-nicotinamide D-nucleotide.. Its function is as follows. DNA ligase that catalyzes the formation of phosphodiester linkages between 5'-phosphoryl and 3'-hydroxyl groups in double-stranded DNA using NAD as a coenzyme and as the energy source for the reaction. It is essential for DNA replication and repair of damaged DNA. This chain is DNA ligase, found in Salmonella choleraesuis (strain SC-B67).